We begin with the raw amino-acid sequence, 473 residues long: ATP synthase subunit beta (473 aa).

158–165 contacts ATP; that stretch reads GGAGVGKT.

The protein belongs to the ATPase alpha/beta chains family. As to quaternary structure, F-type ATPases have 2 components, CF(1) - the catalytic core - and CF(0) - the membrane proton channel. CF(1) has five subunits: alpha(3), beta(3), gamma(1), delta(1), epsilon(1). CF(0) has three main subunits: a(1), b(2) and c(9-12). The alpha and beta chains form an alternating ring which encloses part of the gamma chain. CF(1) is attached to CF(0) by a central stalk formed by the gamma and epsilon chains, while a peripheral stalk is formed by the delta and b chains.

The protein resides in the cell membrane. It catalyses the reaction ATP + H2O + 4 H(+)(in) = ADP + phosphate + 5 H(+)(out). Its function is as follows. Produces ATP from ADP in the presence of a proton gradient across the membrane. The catalytic sites are hosted primarily by the beta subunits. The sequence is that of ATP synthase subunit beta from Geobacillus kaustophilus (strain HTA426).